The chain runs to 237 residues: Class B acid phosphatase (237 aa).

An N-terminal signal peptide occupies residues 1-23 (MKKITLALSAVCLLFTLNHSANA). D69 serves as the catalytic Nucleophile. 2 residues coordinate Mg(2+): D69 and D71. D71 (proton donor) is an active-site residue. Residues 137–138 (TG) and K177 contribute to the substrate site. Residue D192 participates in Mg(2+) binding.

Belongs to the class B bacterial acid phosphatase family. Homotetramer. It depends on Mg(2+) as a cofactor.

It is found in the periplasm. It catalyses the reaction a phosphate monoester + H2O = an alcohol + phosphate. Dephosphorylates several organic phosphate monoesters. Also has a phosphotransferase activity catalyzing the transfer of low-energy phosphate groups from organic phosphate monoesters to free hydroxyl groups of various organic compounds. This Salmonella arizonae (strain ATCC BAA-731 / CDC346-86 / RSK2980) protein is Class B acid phosphatase.